The chain runs to 577 residues: External alternative NAD(P)H-ubiquinone oxidoreductase B1, mitochondrial (577 aa).

The N-terminal 35 residues, 1–35 (MRGFTYLSKVLHSHSSYSKLLVLCSVSTGGLLVYA), are a transit peptide targeting the mitochondrion. 57-87 (RVVVLGTGWGGTSFLKDVDISSYDVQVVSPR) lines the FAD pocket. 221-257 (LHFVIVGGGPTGVEFAAELHDYVYEDLVKIYPSVKDF) provides a ligand contact to NAD(+). In terms of domain architecture, EF-hand spans 378–413 (KVMEDISTIFEAADKDDSGTLSVEEFRDVLEDIIIR). Residues Asp391, Asp393, Ser395, Thr397, and Glu402 each contribute to the Ca(2+) site. A Microbody targeting signal motif is present at residues 568-577 (YIFGRDSSRI).

This sequence belongs to the NADH dehydrogenase family. It depends on FAD as a cofactor.

The protein localises to the mitochondrion inner membrane. Its subcellular location is the peroxisome. It catalyses the reaction a quinone + NADH + H(+) = a quinol + NAD(+). It carries out the reaction a ubiquinone + NADH + H(+) = a ubiquinol + NAD(+). Its activity is regulated as follows. Activity is calcium-dependent with a more pronounced effect at higher pH. Its function is as follows. Calcium-dependent NAD(P)H dehydrogenase. Binds calcium ions. Alternative NADH-ubiquinone oxidoreductase which catalyzes the oxidation of mitochondrial NADH does not translocate protons across the inner mitochondrial membrane. The chain is External alternative NAD(P)H-ubiquinone oxidoreductase B1, mitochondrial (NDB1) from Solanum tuberosum (Potato).